The following is a 216-amino-acid chain: Adenylate kinase (216 aa).

G10 to T15 serves as a coordination point for ATP. An NMP region spans residues S30 to V59. AMP is bound by residues T31, R36, Q57–V59, G85–R88, and Q92. Residues G122–D159 are LID. Residues R123 and T132 to Y133 each bind ATP. AMP-binding residues include R156 and R167. ATP is bound at residue G202.

Belongs to the adenylate kinase family. Monomer.

The protein localises to the cytoplasm. It catalyses the reaction AMP + ATP = 2 ADP. It participates in purine metabolism; AMP biosynthesis via salvage pathway; AMP from ADP: step 1/1. Functionally, catalyzes the reversible transfer of the terminal phosphate group between ATP and AMP. Plays an important role in cellular energy homeostasis and in adenine nucleotide metabolism. The chain is Adenylate kinase from Pseudomonas putida (strain GB-1).